The following is a 95-amino-acid chain: NADH-quinone oxidoreductase subunit 11 (95 aa).

The next 3 membrane-spanning stretches (helical) occupy residues Met-1–Arg-21, Ile-25–Phe-45, and Met-59–Phe-79.

The protein belongs to the complex I subunit 4L family. As to quaternary structure, NDH-1 is composed of 15 different subunits, Nqo1 to Nqo15. The complex has a L-shaped structure, with the hydrophobic arm (subunits Nqo7, Nqo8 and Nqo10 to Nqo14) embedded in the membrane and the hydrophilic peripheral arm (subunits Nqo1 to Nqo6, Nqo9 and Nqo15) protruding into the bacterial cytoplasm. The hydrophilic domain contains all the redox centers.

The protein resides in the cell inner membrane. It carries out the reaction a quinone + NADH + 5 H(+)(in) = a quinol + NAD(+) + 4 H(+)(out). Functionally, NDH-1 shuttles electrons from NADH, via FMN and iron-sulfur (Fe-S) centers, to quinones in the respiratory chain. The immediate electron acceptor for the enzyme in this species is menaquinone. Couples the redox reaction to proton translocation (for every two electrons transferred, four hydrogen ions are translocated across the cytoplasmic membrane), and thus conserves the redox energy in a proton gradient required for the synthesis of ATP. The protein is NADH-quinone oxidoreductase subunit 11 (nqo11) of Thermus thermophilus (strain ATCC 27634 / DSM 579 / HB8).